Consider the following 185-residue polypeptide: Crossover junction endodeoxyribonuclease RuvC (185 aa).

Residues aspartate 16, glutamate 75, and aspartate 147 contribute to the active site. The Mg(2+) site is built by aspartate 16, glutamate 75, and aspartate 147.

Belongs to the RuvC family. In terms of assembly, homodimer which binds Holliday junction (HJ) DNA. The HJ becomes 2-fold symmetrical on binding to RuvC with unstacked arms; it has a different conformation from HJ DNA in complex with RuvA. In the full resolvosome a probable DNA-RuvA(4)-RuvB(12)-RuvC(2) complex forms which resolves the HJ. The cofactor is Mg(2+).

The protein localises to the cytoplasm. The catalysed reaction is Endonucleolytic cleavage at a junction such as a reciprocal single-stranded crossover between two homologous DNA duplexes (Holliday junction).. In terms of biological role, the RuvA-RuvB-RuvC complex processes Holliday junction (HJ) DNA during genetic recombination and DNA repair. Endonuclease that resolves HJ intermediates. Cleaves cruciform DNA by making single-stranded nicks across the HJ at symmetrical positions within the homologous arms, yielding a 5'-phosphate and a 3'-hydroxyl group; requires a central core of homology in the junction. The consensus cleavage sequence is 5'-(A/T)TT(C/G)-3'. Cleavage occurs on the 3'-side of the TT dinucleotide at the point of strand exchange. HJ branch migration catalyzed by RuvA-RuvB allows RuvC to scan DNA until it finds its consensus sequence, where it cleaves and resolves the cruciform DNA. The chain is Crossover junction endodeoxyribonuclease RuvC from Aromatoleum aromaticum (strain DSM 19018 / LMG 30748 / EbN1) (Azoarcus sp. (strain EbN1)).